Consider the following 461-residue polypeptide: Transcriptional activator RocR (461 aa).

At D57 the chain carries 4-aspartylphosphate. A Sigma-54 factor interaction domain is found at 143–372 (ILGTSPAIQD…EHMIEGAMNF (230 aa)). Residues 171-178 (GETGTGKE) and 233-242 (AHGGTLLLDE) each bind ATP. Positions 434–453 (ISKAAQELGISRQSLQYRLK) form a DNA-binding region, H-T-H motif.

Functionally, positive regulator of arginine catabolism. Controls the transcription of the two operons rocABC and rocDEF and probably acts by binding to the corresponding upstream activating sequences. The chain is Transcriptional activator RocR (rocR) from Bacillus subtilis (strain 168).